The following is a 241-amino-acid chain: MWMHKKILLKLSGESLKGDSSYGIDPRTIKKIAWEIKEIKDLGVKIAIIVGAGNLWRGRTGEELGMDRSQADYMGMLGTIMNSLALQDALEQTNTITRVMTAFPVSSVAEPYIRRKAIRHLEKDRVVILGAGAGSPYFSTDTAAALRAAELNIDVILMAKNNIEGVYNKDPKKYQDAVLIKHIKHQQILSQRLAVMDITAASLCLENNIDILVFNMLKKGNIKKVVLKEGNIGTVISSKGE.

ATP is bound by residues Lys10–Gly13, Gly53, and Arg57. Residues Asp72 and Ala133–Thr140 each bind UMP. The ATP site is built by Asn161, Tyr167, and Asp170.

It belongs to the UMP kinase family. In terms of assembly, homohexamer.

It is found in the cytoplasm. The enzyme catalyses UMP + ATP = UDP + ADP. Its pathway is pyrimidine metabolism; CTP biosynthesis via de novo pathway; UDP from UMP (UMPK route): step 1/1. Its activity is regulated as follows. Inhibited by UTP. Its function is as follows. Catalyzes the reversible phosphorylation of UMP to UDP. The chain is Uridylate kinase from Aster yellows witches'-broom phytoplasma (strain AYWB).